An 878-amino-acid polypeptide reads, in one-letter code: Leucine--tRNA ligase (878 aa).

Residues 43 to 53 carry the 'HIGH' region motif; the sequence is PYPSGRIHIGH. Positions 630–634 match the 'KMSKS' region motif; sequence KMSKS. K633 serves as a coordination point for ATP.

The protein belongs to the class-I aminoacyl-tRNA synthetase family.

Its subcellular location is the cytoplasm. It carries out the reaction tRNA(Leu) + L-leucine + ATP = L-leucyl-tRNA(Leu) + AMP + diphosphate. The sequence is that of Leucine--tRNA ligase from Nitrobacter hamburgensis (strain DSM 10229 / NCIMB 13809 / X14).